The chain runs to 787 residues: DNA ligase (787 aa).

Residues 32–36 (DAEYD), 81–82 (SL), and Glu121 each bind NAD(+). Lys123 (N6-AMP-lysine intermediate) is an active-site residue. NAD(+) is bound by residues Arg144, Glu181, Lys297, and Lys321. Zn(2+) is bound by residues Cys415, Cys418, Cys445, and Cys451. The BRCT domain maps to 703–787 (VEGLPLAGQT…RLTELGVAVD (85 aa)).

It belongs to the NAD-dependent DNA ligase family. LigA subfamily. The cofactor is Mg(2+). It depends on Mn(2+) as a cofactor.

It catalyses the reaction NAD(+) + (deoxyribonucleotide)n-3'-hydroxyl + 5'-phospho-(deoxyribonucleotide)m = (deoxyribonucleotide)n+m + AMP + beta-nicotinamide D-nucleotide.. Functionally, DNA ligase that catalyzes the formation of phosphodiester linkages between 5'-phosphoryl and 3'-hydroxyl groups in double-stranded DNA using NAD as a coenzyme and as the energy source for the reaction. It is essential for DNA replication and repair of damaged DNA. This Pseudomonas syringae pv. tomato (strain ATCC BAA-871 / DC3000) protein is DNA ligase.